Here is a 238-residue protein sequence, read N- to C-terminus: tRNA (guanine-N(7)-)-methyltransferase (238 aa).

4 residues coordinate S-adenosyl-L-methionine: glutamate 68, glutamate 93, aspartate 120, and aspartate 143. Aspartate 143 is an active-site residue. Substrate is bound by residues lysine 147, aspartate 179, and 216–219 (TKFE).

The protein belongs to the class I-like SAM-binding methyltransferase superfamily. TrmB family.

It catalyses the reaction guanosine(46) in tRNA + S-adenosyl-L-methionine = N(7)-methylguanosine(46) in tRNA + S-adenosyl-L-homocysteine. It participates in tRNA modification; N(7)-methylguanine-tRNA biosynthesis. Functionally, catalyzes the formation of N(7)-methylguanine at position 46 (m7G46) in tRNA. This is tRNA (guanine-N(7)-)-methyltransferase from Shewanella denitrificans (strain OS217 / ATCC BAA-1090 / DSM 15013).